A 309-amino-acid polypeptide reads, in one-letter code: Serine/threonine-protein phosphatase 2A catalytic subunit alpha isoform (309 aa).

Residues D57, H59, D85, and N117 each contribute to the Mn(2+) site. Positions 57, 59, and 85 each coordinate Zn(2+). Fe(3+) contacts are provided by D85 and N117. H118 (proton donor) is an active-site residue. Residues H167 and H241 each coordinate Mn(2+). Fe(3+) contacts are provided by H167 and H241. Y307 carries the phosphotyrosine modification. Residue L309 is modified to Leucine methyl ester.

This sequence belongs to the PPP phosphatase family. PP-1 subfamily. PP2A consists of a common heterodimeric core enzyme composed of PPP2CA, a 36 kDa catalytic subunit (subunit C), and PPP2R1A, a 65 kDa constant regulatory subunit (PR65 or subunit A), that associates with a variety of regulatory subunits. Proteins that associate with the core dimer include three families of regulatory subunits B (the R2/B/PR55/B55, R3/B''/PR72/PR130/PR59 and R5/B'/B56 families), the 48 kDa variable regulatory subunit, viral proteins, and cell signaling molecules. Interacts with the PP2A A subunit PPP2R1A. Interacts with the regulatory subunit PPP2R2A. Interacts (via C-terminus) with PTPA. Interacts with NXN; the interaction is direct. Interacts with KCTD20. Interacts with BTBD10. Interacts with SGO1 and SGO2. Interacts with RAF1. Interaction with IGBP1 protects unassembled PPP2CA from degradative ubiquitination. Interacts with GSK3B (via C2 domain). Interacts with MFHAS1; retains PPP2CA into the cytoplasm and excludes it from the nucleus. Interacts with PABIR1/FAM122A. Interacts with ADCY8; interaction is phosphatase activity-dependent; antagonizes interaction between ADCY8 and calmodulin. Interacts with CRTC3 (when phosphorylated at 'Ser-391'). Interacts with SPRY2; the interaction is inhibited by TESK1 interaction with SPRY2, possibly by vesicular sequestration of SPRY2. Interacts with TRAF3IP3. Interacts with AMBRA1 (via PxP motifs); enhancing interaction between PPP2CA and MYC or FOXO3. Forms a complex with AMBRA1 and BECN1; AMBRA1 and BECN1 components of the complex regulate MYC stability via different pathways. Part of the core of STRIPAK complexes composed of PP2A catalytic and scaffolding subunits, the striatins (PP2A regulatory subunits), the striatin-associated proteins MOB4, STRIP1 and STRIP2, PDCD10 and members of the STE20 kinases, such as STK24 and STK26. Phosphatase component of the Integrator-PP2A (INTAC) complex, composed of the Integrator core complex and protein phosphatase 2A subunits PPP2CA and PPP2R1A. It depends on Mn(2+) as a cofactor. Requires Fe(3+) as cofactor. Zn(2+) serves as cofactor. In terms of processing, reversibly methyl esterified on Leu-309 by leucine carboxyl methyltransferase 1 (Lcmt1) and protein phosphatase methylesterase 1 (Ppme1). Carboxyl methylation influences the affinity of the catalytic subunit for the different regulatory subunits, thereby modulating the PP2A holoenzyme's substrate specificity, enzyme activity and cellular localization. Post-translationally, phosphorylation of either threonine (by autophosphorylation-activated protein kinase) or tyrosine results in inactivation of the phosphatase. Auto-dephosphorylation has been suggested as a mechanism for reactivation. Polyubiquitinated, leading to its degradation by the proteasome.

It localises to the cytoplasm. The protein resides in the nucleus. Its subcellular location is the chromosome. The protein localises to the centromere. It is found in the cytoskeleton. It localises to the spindle pole. It carries out the reaction O-phospho-L-seryl-[protein] + H2O = L-seryl-[protein] + phosphate. The enzyme catalyses O-phospho-L-threonyl-[protein] + H2O = L-threonyl-[protein] + phosphate. Its activity is regulated as follows. Inhibited by the interaction between PPP2R2A and ARPP19; this inhibition is enhanced when ARPP19 is phosphorylated. Inhibited by the interaction between PPP2R2A and PABIR1/FAM122A. Functionally, catalytic subunit of protein phosphatase 2A (PP2A), a serine/threonine phosphatase involved in the regulation of a wide variety of enzymes, signal transduction pathways, and cellular events. PP2A is the major phosphatase for microtubule-associated proteins (MAPs). PP2A can modulate the activity of phosphorylase B kinase casein kinase 2, mitogen-stimulated S6 kinase, and MAP-2 kinase. Cooperates with SGO2 to protect centromeric cohesin from separase-mediated cleavage in oocytes specifically during meiosis I. Can dephosphorylate various proteins, such as AXIN1, p53/TP53, PIM3, WEE1. Activates RAF1 by dephosphorylating it at 'Ser-259'. Mediates dephosphorylation of WEE1, preventing its ubiquitin-mediated proteolysis, increasing WEE1 protein levels, and promoting the G2/M checkpoint. Mediates dephosphorylation of MYC; promoting its ubiquitin-mediated proteolysis: interaction with AMBRA1 enhances interaction between PPP2CA and MYC. Mediates dephosphorylation of FOXO3; promoting its stabilization: interaction with AMBRA1 enhances interaction between PPP2CA and FOXO3. Catalyzes dephosphorylation of the pyrin domain of NLRP3, promoting assembly of the NLRP3 inflammasome. Together with RACK1 adapter, mediates dephosphorylation of AKT1 at 'Ser-473', preventing AKT1 activation and AKT-mTOR signaling pathway. Dephosphorylation of AKT1 is essential for regulatory T-cells (Treg) homeostasis and stability. Catalyzes dephosphorylation of PIM3, promotinh PIM3 ubiquitination and proteasomal degradation. Part of the striatin-interacting phosphatase and kinase (STRIPAK) complexes. STRIPAK complexes have critical roles in protein (de)phosphorylation and are regulators of multiple signaling pathways including Hippo, MAPK, nuclear receptor and cytoskeleton remodeling. Different types of STRIPAK complexes are involved in a variety of biological processes such as cell growth, differentiation, apoptosis, metabolism and immune regulation. Key mediator of a quality checkpoint during transcription elongation as part of the Integrator-PP2A (INTAC) complex. The INTAC complex drives premature transcription termination of transcripts that are unfavorably configured for transcriptional elongation: within the INTAC complex, PPP2CA catalyzes dephosphorylation of the C-terminal domain (CTD) of Pol II subunit POLR2A/RPB1 and SUPT5H/SPT5, thereby preventing transcriptional elongation. This chain is Serine/threonine-protein phosphatase 2A catalytic subunit alpha isoform (Ppp2ca), found in Rattus norvegicus (Rat).